Consider the following 157-residue polypeptide: 6,7-dimethyl-8-ribityllumazine synthase (157 aa).

5-amino-6-(D-ribitylamino)uracil is bound by residues F26, 60–62 (ALE), and 86–88 (AVI). 91–92 (ET) contributes to the (2S)-2-hydroxy-3-oxobutyl phosphate binding site. H94 acts as the Proton donor in catalysis. Residue N119 participates in 5-amino-6-(D-ribitylamino)uracil binding. Position 133 (R133) interacts with (2S)-2-hydroxy-3-oxobutyl phosphate.

Belongs to the DMRL synthase family.

It carries out the reaction (2S)-2-hydroxy-3-oxobutyl phosphate + 5-amino-6-(D-ribitylamino)uracil = 6,7-dimethyl-8-(1-D-ribityl)lumazine + phosphate + 2 H2O + H(+). It functions in the pathway cofactor biosynthesis; riboflavin biosynthesis; riboflavin from 2-hydroxy-3-oxobutyl phosphate and 5-amino-6-(D-ribitylamino)uracil: step 1/2. Functionally, catalyzes the formation of 6,7-dimethyl-8-ribityllumazine by condensation of 5-amino-6-(D-ribitylamino)uracil with 3,4-dihydroxy-2-butanone 4-phosphate. This is the penultimate step in the biosynthesis of riboflavin. This chain is 6,7-dimethyl-8-ribityllumazine synthase, found in Laribacter hongkongensis (strain HLHK9).